The primary structure comprises 243 residues: 1-(5-phosphoribosyl)-5-[(5-phosphoribosylamino)methylideneamino] imidazole-4-carboxamide isomerase (243 aa).

D8 acts as the Proton acceptor in catalysis. The active-site Proton donor is the D130.

It belongs to the HisA/HisF family.

The protein resides in the cytoplasm. It catalyses the reaction 1-(5-phospho-beta-D-ribosyl)-5-[(5-phospho-beta-D-ribosylamino)methylideneamino]imidazole-4-carboxamide = 5-[(5-phospho-1-deoxy-D-ribulos-1-ylimino)methylamino]-1-(5-phospho-beta-D-ribosyl)imidazole-4-carboxamide. It participates in amino-acid biosynthesis; L-histidine biosynthesis; L-histidine from 5-phospho-alpha-D-ribose 1-diphosphate: step 4/9. In Acinetobacter baylyi (strain ATCC 33305 / BD413 / ADP1), this protein is 1-(5-phosphoribosyl)-5-[(5-phosphoribosylamino)methylideneamino] imidazole-4-carboxamide isomerase.